The following is a 181-amino-acid chain: Protein Syd (181 aa).

This sequence belongs to the Syd family.

Its subcellular location is the cell inner membrane. Its function is as follows. Interacts with the SecY protein in vivo. May bind preferentially to an uncomplexed state of SecY, thus functioning either as a chelating agent for excess SecY in the cell or as a regulatory factor that negatively controls the translocase function. The protein is Protein Syd of Escherichia coli O157:H7.